We begin with the raw amino-acid sequence, 419 residues long: Chaperone protein dnaJ 2 (419 aa).

The region spanning 14 to 75 (KFYEILGVPK…EKREIYDQYG (62 aa)) is the J domain. Residues 136-220 (GTTKKLSLSR…CKGEKVVSEK (85 aa)) form a CR-type zinc finger. Residues Cys-149, Cys-152, Cys-165, Cys-168, Cys-192, Cys-195, Cys-208, and Cys-211 each coordinate Zn(2+). CXXCXGXG motif repeat units follow at residues 149–156 (CSKCNGKG), 165–172 (CGGCQGSG), 192–199 (CNDCKGTG), and 208–215 (CPQCKGEK). The segment covering 378 to 391 (TTLHDVNIEDEMKR) has biased composition (basic and acidic residues). Positions 378-419 (TTLHDVNIEDEMKRKAQAQREAYDDDEEDHPGGAQRVQCAQQ) are disordered. Residue Cys-416 is modified to Cysteine methyl ester. Cys-416 is lipidated: S-farnesyl cysteine. A propeptide spans 417–419 (AQQ) (removed in mature form).

This sequence belongs to the DnaJ family. A/I subfamily. Homodimer. Zn(2+) serves as cofactor. Farnesylated. Expressed in both etiolated and light-grown tissues.

It is found in the membrane. Its function is as follows. Plays a continuous role in plant development probably in the structural organization of compartments. In Arabidopsis thaliana (Mouse-ear cress), this protein is Chaperone protein dnaJ 2 (ATJ2).